An 851-amino-acid chain; its full sequence is DNA mismatch repair protein MutS (851 aa).

602 to 609 (GPNMSGKS) is an ATP binding site.

This sequence belongs to the DNA mismatch repair MutS family.

In terms of biological role, this protein is involved in the repair of mismatches in DNA. It is possible that it carries out the mismatch recognition step. This protein has a weak ATPase activity. This Streptococcus pyogenes serotype M12 (strain MGAS2096) protein is DNA mismatch repair protein MutS.